Reading from the N-terminus, the 187-residue chain is ATP synthase subunit delta (187 aa).

The protein belongs to the ATPase delta chain family. In terms of assembly, F-type ATPases have 2 components, F(1) - the catalytic core - and F(0) - the membrane proton channel. F(1) has five subunits: alpha(3), beta(3), gamma(1), delta(1), epsilon(1). F(0) has three main subunits: a(1), b(2) and c(10-14). The alpha and beta chains form an alternating ring which encloses part of the gamma chain. F(1) is attached to F(0) by a central stalk formed by the gamma and epsilon chains, while a peripheral stalk is formed by the delta and b chains.

The protein resides in the cell membrane. F(1)F(0) ATP synthase produces ATP from ADP in the presence of a proton or sodium gradient. F-type ATPases consist of two structural domains, F(1) containing the extramembraneous catalytic core and F(0) containing the membrane proton channel, linked together by a central stalk and a peripheral stalk. During catalysis, ATP synthesis in the catalytic domain of F(1) is coupled via a rotary mechanism of the central stalk subunits to proton translocation. In terms of biological role, this protein is part of the stalk that links CF(0) to CF(1). It either transmits conformational changes from CF(0) to CF(1) or is implicated in proton conduction. In Mesomycoplasma hyopneumoniae (strain 232) (Mycoplasma hyopneumoniae), this protein is ATP synthase subunit delta.